The following is a 337-amino-acid chain: Holliday junction branch migration complex subunit RuvB (337 aa).

The interval 4-185 (ADRLISNSFE…FGITQRLEYY (182 aa)) is large ATPase domain (RuvB-L). ATP contacts are provided by residues Ile-24, Arg-25, Gly-66, Lys-69, Thr-70, Thr-71, 132–134 (EDY), Arg-175, Tyr-185, and Arg-222. Thr-70 is a binding site for Mg(2+). Residues 186 to 256 (KVDDLKDIVQ…TAKKALDMLD (71 aa)) are small ATPAse domain (RuvB-S). A head domain (RuvB-H) region spans residues 259-337 (SSGFDYMDRK…HFGLDIPEAR (79 aa)). Positions 314 and 319 each coordinate DNA.

The protein belongs to the RuvB family. Homohexamer. Forms an RuvA(8)-RuvB(12)-Holliday junction (HJ) complex. HJ DNA is sandwiched between 2 RuvA tetramers; dsDNA enters through RuvA and exits via RuvB. An RuvB hexamer assembles on each DNA strand where it exits the tetramer. Each RuvB hexamer is contacted by two RuvA subunits (via domain III) on 2 adjacent RuvB subunits; this complex drives branch migration. In the full resolvosome a probable DNA-RuvA(4)-RuvB(12)-RuvC(2) complex forms which resolves the HJ.

It is found in the cytoplasm. The catalysed reaction is ATP + H2O = ADP + phosphate + H(+). Its function is as follows. The RuvA-RuvB-RuvC complex processes Holliday junction (HJ) DNA during genetic recombination and DNA repair, while the RuvA-RuvB complex plays an important role in the rescue of blocked DNA replication forks via replication fork reversal (RFR). RuvA specifically binds to HJ cruciform DNA, conferring on it an open structure. The RuvB hexamer acts as an ATP-dependent pump, pulling dsDNA into and through the RuvAB complex. RuvB forms 2 homohexamers on either side of HJ DNA bound by 1 or 2 RuvA tetramers; 4 subunits per hexamer contact DNA at a time. Coordinated motions by a converter formed by DNA-disengaged RuvB subunits stimulates ATP hydrolysis and nucleotide exchange. Immobilization of the converter enables RuvB to convert the ATP-contained energy into a lever motion, pulling 2 nucleotides of DNA out of the RuvA tetramer per ATP hydrolyzed, thus driving DNA branch migration. The RuvB motors rotate together with the DNA substrate, which together with the progressing nucleotide cycle form the mechanistic basis for DNA recombination by continuous HJ branch migration. Branch migration allows RuvC to scan DNA until it finds its consensus sequence, where it cleaves and resolves cruciform DNA. In Photobacterium profundum (strain SS9), this protein is Holliday junction branch migration complex subunit RuvB.